A 288-amino-acid chain; its full sequence is Polyamine aminopropyltransferase (288 aa).

A PABS domain is found at 9–238 (ETLHDQFGQY…GIMTFAWATD (230 aa)). Gln-33 is an S-methyl-5'-thioadenosine binding site. His-64 and Asp-88 together coordinate spermidine. S-methyl-5'-thioadenosine contacts are provided by residues Glu-108 and 140-141 (DG). Asp-158 functions as the Proton acceptor in the catalytic mechanism. Residue 158–161 (DCTD) coordinates spermidine. Residue Pro-165 coordinates S-methyl-5'-thioadenosine.

This sequence belongs to the spermidine/spermine synthase family. In terms of assembly, homodimer or homotetramer.

It is found in the cytoplasm. It catalyses the reaction S-adenosyl 3-(methylsulfanyl)propylamine + putrescine = S-methyl-5'-thioadenosine + spermidine + H(+). Its pathway is amine and polyamine biosynthesis; spermidine biosynthesis; spermidine from putrescine: step 1/1. In terms of biological role, catalyzes the irreversible transfer of a propylamine group from the amino donor S-adenosylmethioninamine (decarboxy-AdoMet) to putrescine (1,4-diaminobutane) to yield spermidine. This chain is Polyamine aminopropyltransferase, found in Escherichia coli O17:K52:H18 (strain UMN026 / ExPEC).